Here is a 309-residue protein sequence, read N- to C-terminus: 1,4-dihydroxy-2-naphthoyl-CoA synthase (309 aa).

Substrate contacts are provided by residues R53, 98-102, Y110, 152-156, T179, S185, Y282, and K297; these read SGGDQ and WAAGG.

The protein belongs to the enoyl-CoA hydratase/isomerase family. MenB subfamily.

The catalysed reaction is 2-succinylbenzoyl-CoA + H(+) = 1,4-dihydroxy-2-naphthoyl-CoA + H2O. It functions in the pathway quinol/quinone metabolism; 1,4-dihydroxy-2-naphthoate biosynthesis; 1,4-dihydroxy-2-naphthoate from chorismate: step 6/7. Its pathway is quinol/quinone metabolism; menaquinone biosynthesis. Functionally, converts o-succinylbenzoyl-CoA (OSB-CoA) to 1,4-dihydroxy-2-naphthoyl-CoA (DHNA-CoA). This is 1,4-dihydroxy-2-naphthoyl-CoA synthase from Mycolicibacterium smegmatis (strain ATCC 700084 / mc(2)155) (Mycobacterium smegmatis).